A 1175-amino-acid chain; its full sequence is 1-phosphatidylinositol 4,5-bisphosphate phosphodiesterase beta-4 (1175 aa).

The residue at position 2 (Ala2) is an N-acetylalanine. Residues 313-463 enclose the PI-PLC X-box domain; it reads QEMDHPLAHY…LKRKILIKNK (151 aa). Residues His328 and His375 contribute to the active site. The interval 487–512 is disordered; sequence AAPASILEDDNEEEIESADQEEEAHP. Over residues 493–508 the composition is skewed to acidic residues; sequence LEDDNEEEIESADQEE. Positions 565-681 constitute a PI-PLC Y-box domain; it reads LSTMINYAQP…GYLLKPDFMR (117 aa). The C2 domain occupies 684–809; that stretch reads DRTFDPFSET…SLRNEGNKPL (126 aa). Disordered stretches follow at residues 860–904 and 1082–1110; these read SDIA…LGSG and KISM…VREL. Composition is skewed to polar residues over residues 885–900 and 1085–1094; these read VTPQ…TTAA and MENSKAISQD. Thr886 is modified (phosphothreonine). Residues 1095 to 1109 are compositionally biased toward basic and acidic residues; that stretch reads KSIKNKAERERRVRE.

Ca(2+) is required as a cofactor. As to expression, preferentially expressed in the retina.

Its subcellular location is the cell membrane. The enzyme catalyses a 1,2-diacyl-sn-glycero-3-phospho-(1D-myo-inositol-4,5-bisphosphate) + H2O = 1D-myo-inositol 1,4,5-trisphosphate + a 1,2-diacyl-sn-glycerol + H(+). The catalysed reaction is a 1,2-diacyl-sn-glycero-3-phospho-(1D-myo-inositol) + H2O = 1D-myo-inositol 1-phosphate + a 1,2-diacyl-sn-glycerol + H(+). Activated phosphatidylinositol-specific phospholipase C enzymes catalyze the production of the second messenger molecules diacylglycerol (DAG) and inositol 1,4,5-trisphosphate (IP3) involved in G-protein coupled receptor signaling pathways. PLCB4 is a direct effector of the endothelin receptor signaling pathway that plays an essential role in lower jaw and middle ear structures development. This chain is 1-phosphatidylinositol 4,5-bisphosphate phosphodiesterase beta-4, found in Rattus norvegicus (Rat).